The chain runs to 188 residues: V-type proton ATPase subunit E (188 aa).

It belongs to the V-ATPase E subunit family.

In terms of biological role, produces ATP from ADP in the presence of a proton gradient across the membrane. The polypeptide is V-type proton ATPase subunit E (Dictyoglomus thermophilum (strain ATCC 35947 / DSM 3960 / H-6-12)).